A 428-amino-acid polypeptide reads, in one-letter code: Delta-aminolevulinic acid dehydratase, chloroplastic (428 aa).

Catalysis depends on lysine 294, which acts as the Schiff-base intermediate with substrate. The 5-aminolevulinate site is built by arginine 304 and lysine 316. Glutamate 332 provides a ligand contact to Mg(2+). Lysine 347 functions as the Schiff-base intermediate with substrate in the catalytic mechanism. 5-aminolevulinate-binding residues include serine 373 and tyrosine 412.

This sequence belongs to the ALAD family. Homooctamer. Mg(2+) is required as a cofactor.

It is found in the plastid. Its subcellular location is the chloroplast. It catalyses the reaction 2 5-aminolevulinate = porphobilinogen + 2 H2O + H(+). Its pathway is porphyrin-containing compound metabolism; protoporphyrin-IX biosynthesis; coproporphyrinogen-III from 5-aminolevulinate: step 1/4. Its function is as follows. Catalyzes an early step in the biosynthesis of tetrapyrroles. Binds two molecules of 5-aminolevulinate per subunit, each at a distinct site, and catalyzes their condensation to form porphobilinogen. In Hordeum vulgare (Barley), this protein is Delta-aminolevulinic acid dehydratase, chloroplastic (HEMB).